The primary structure comprises 267 residues: Luciferase (267 aa).

Residue Asn-4 is glycosylated (N-linked (GlcNAc...) asparagine). Residues 17-39 (LSSRSIAITCGVVLASAIAFPII) traverse the membrane as a helical segment.

It belongs to the fungal luciferase family.

It is found in the membrane. It catalyses the reaction 3-hydroxyhispidin + O2 = (E)-caffeoylpyruvate + hnu + CO2. The catalysed reaction is 3-hydroxyhispidin + O2 = 4-[(E)-2-(3,4-dihydroxyphenyl)ethenyl]-1,7-dihydroxy-2,3,5-trioxabicyclo[2.2.2]oct-7-en-6-one. Luciferase; part of the gene cluster that mediates the fungal bioluminescence cycle. Uses the fungal luciferin 3-hydroxyhispidin as a substrate to produce an endoperoxide as a high-energy intermediate with decomposition that yields oxyluciferin (also known as caffeoylpyruvate) and light emission. The fungal bioluminescence cycle begins with the hispidin synthetase that catalyzes the formation of hispidin which is further hydroxylated by the hispidin-3-hydroxylase, yielding the fungal luciferin 3-hydroxyhispidin. The luciferase then produces an endoperoxide as a high-energy intermediate with decomposition that yields oxyluciferin and light emission. Oxyluciferin can be recycled to caffeic acid by caffeoylpyruvate hydrolase. The polypeptide is Luciferase (Neonothopanus nambi (Agaricus nambi)).